The following is an 865-amino-acid chain: NBPF family member NBPF11 (865 aa).

The stretch at 70-130 (MLRNERQFKE…RSLNEHLQAL (61 aa)) forms a coiled coil. The segment at 161–200 (KLSPENDEDEDEDVQVEEDEKVLESSAPREVQKAEESKVP) is disordered. The segment covering 165 to 181 (ENDEDEDEDVQVEEDEK) has biased composition (acidic residues). An Olduvai 1 domain is found at 165–259 (ENDEDEDEDV…GCQDALNILP (95 aa)). Positions 190 to 200 (EVQKAEESKVP) are enriched in basic and acidic residues. Residues 339 to 401 (KSMLRNERQF…RSLNEHLQAL (63 aa)) adopt a coiled-coil conformation. Olduvai domains follow at residues 436 to 528 (ENDN…HIIP), 529 to 617 (ENES…ATGP), 620 to 675 (SREL…VDMD), 676 to 767 (EIEK…PPCP), and 770 to 865 (SREL…SAAC). Disordered regions lie at residues 450 to 475 (AEKVQKSSSPREMQKAEEKEVPEDSL) and 520 to 567 (WEDA…GYST). Composition is skewed to acidic residues over residues 530–539 (NESDDEEEEE) and 550–562 (ESEEEEVPQESWD). Residues 829-865 (RGRGRKEGEEDQRRKEEGEEKKGKKIKTHHAPGSAAC) form a disordered region. Residues 833-850 (RKEGEEDQRRKEEGEEKK) are compositionally biased toward basic and acidic residues.

The protein belongs to the NBPF family. Expressed in spinal cord.

Its subcellular location is the cytoplasm. This chain is NBPF family member NBPF11, found in Homo sapiens (Human).